Consider the following 865-residue polypeptide: Eukaryotic translation initiation factor 3 subunit C (865 aa).

Disordered stretches follow at residues 1-92 and 206-243; these read MSRF…AKDK and EDEE…VGKG. Acidic residues-rich tracts occupy residues 16–54 and 69–80; these read SSDE…DSDA and DDDSSDEEDSDA. The segment covering 82–92 has biased composition (basic and acidic residues); that stretch reads VTTKVKSAKDK. The span at 226–235 shows a compositional bias: acidic residues; that stretch reads ATAEDEEDDE. A PCI domain is found at 606–780; sequence FHMHINLELL…QTVIFRKGVE (175 aa). The disordered stretch occupies residues 801–865; that stretch reads SNERTLEQRT…GGALGAAVRA (65 aa). The span at 808–817 shows a compositional bias: polar residues; it reads QRTQGTSNAF. Over residues 822 to 841 the composition is skewed to gly residues; it reads GRGGRGGGRGRGGGRGGPRF.

This sequence belongs to the eIF-3 subunit C family. Component of the eukaryotic translation initiation factor 3 (eIF-3) complex.

It localises to the cytoplasm. In terms of biological role, component of the eukaryotic translation initiation factor 3 (eIF-3) complex, which is involved in protein synthesis of a specialized repertoire of mRNAs and, together with other initiation factors, stimulates binding of mRNA and methionyl-tRNAi to the 40S ribosome. The eIF-3 complex specifically targets and initiates translation of a subset of mRNAs involved in cell proliferation. The chain is Eukaryotic translation initiation factor 3 subunit C from Pyricularia oryzae (strain 70-15 / ATCC MYA-4617 / FGSC 8958) (Rice blast fungus).